We begin with the raw amino-acid sequence, 1028 residues long: Receptor-type guanylate cyclase gcy-13 (1028 aa).

N-linked (GlcNAc...) asparagine glycans are attached at residues N58, N156, N324, N337, N377, and N394. The chain crosses the membrane as a helical span at residues I438–F458. Residues L459–A1028 are Cytoplasmic-facing. The interval E491–G511 is disordered. Low complexity predominate over residues R497–G511. Residues L499–M770 enclose the Protein kinase domain. Residues S786–L817 adopt a coiled-coil conformation. Residues T844–E974 enclose the Guanylate cyclase domain.

Belongs to the adenylyl cyclase class-4/guanylyl cyclase family. As to expression, expressed bilaterally in RIM interneurons.

It localises to the cell membrane. The catalysed reaction is GTP = 3',5'-cyclic GMP + diphosphate. Guanylate cyclase involved in the production of the second messenger cGMP. The sequence is that of Receptor-type guanylate cyclase gcy-13 from Caenorhabditis elegans.